Reading from the N-terminus, the 319-residue chain is tRNA-cytidine(32) 2-sulfurtransferase (319 aa).

The PP-loop motif signature appears at 45 to 50 (SGGKDS). Cysteine 120, cysteine 123, and cysteine 211 together coordinate [4Fe-4S] cluster.

Belongs to the TtcA family. In terms of assembly, homodimer. Requires Mg(2+) as cofactor. The cofactor is [4Fe-4S] cluster.

The protein localises to the cytoplasm. The catalysed reaction is cytidine(32) in tRNA + S-sulfanyl-L-cysteinyl-[cysteine desulfurase] + AH2 + ATP = 2-thiocytidine(32) in tRNA + L-cysteinyl-[cysteine desulfurase] + A + AMP + diphosphate + H(+). Its pathway is tRNA modification. Its function is as follows. Catalyzes the ATP-dependent 2-thiolation of cytidine in position 32 of tRNA, to form 2-thiocytidine (s(2)C32). The sulfur atoms are provided by the cysteine/cysteine desulfurase (IscS) system. The chain is tRNA-cytidine(32) 2-sulfurtransferase from Shewanella woodyi (strain ATCC 51908 / MS32).